A 256-amino-acid chain; its full sequence is Acetylglutamate kinase (256 aa).

Substrate is bound by residues 40–41 (GG), arginine 62, and asparagine 153.

This sequence belongs to the acetylglutamate kinase family. ArgB subfamily.

The protein resides in the cytoplasm. The catalysed reaction is N-acetyl-L-glutamate + ATP = N-acetyl-L-glutamyl 5-phosphate + ADP. Its pathway is amino-acid biosynthesis; L-arginine biosynthesis; N(2)-acetyl-L-ornithine from L-glutamate: step 2/4. Its function is as follows. Catalyzes the ATP-dependent phosphorylation of N-acetyl-L-glutamate. This chain is Acetylglutamate kinase, found in Bacillus cytotoxicus (strain DSM 22905 / CIP 110041 / 391-98 / NVH 391-98).